We begin with the raw amino-acid sequence, 225 residues long: Ribonuclease 3 (225 aa).

The RNase III domain occupies 7–129 (LPRLGRILGY…IIGAIYLDAD (123 aa)). Residue glutamate 42 participates in Mg(2+) binding. Aspartate 46 is an active-site residue. Mg(2+) is bound by residues aspartate 115 and glutamate 118. Glutamate 118 is a catalytic residue. A DRBM domain is found at 155–225 (DPKTLLQEHL…AAEVLERIKK (71 aa)).

This sequence belongs to the ribonuclease III family. In terms of assembly, homodimer. Mg(2+) is required as a cofactor.

It localises to the cytoplasm. The enzyme catalyses Endonucleolytic cleavage to 5'-phosphomonoester.. Its function is as follows. Digests double-stranded RNA. Involved in the processing of primary rRNA transcript to yield the immediate precursors to the large and small rRNAs (23S and 16S). Processes some mRNAs, and tRNAs when they are encoded in the rRNA operon. Processes pre-crRNA and tracrRNA of type II CRISPR loci if present in the organism. The polypeptide is Ribonuclease 3 (Shewanella loihica (strain ATCC BAA-1088 / PV-4)).